The sequence spans 223 residues: 7-cyano-7-deazaguanine synthase (223 aa).

8–18 (MSGGMDSTLCA) contributes to the ATP binding site. Zn(2+)-binding residues include Cys187, Cys195, Cys198, and Cys201.

The protein belongs to the QueC family. Zn(2+) serves as cofactor.

The catalysed reaction is 7-carboxy-7-deazaguanine + NH4(+) + ATP = 7-cyano-7-deazaguanine + ADP + phosphate + H2O + H(+). Its pathway is purine metabolism; 7-cyano-7-deazaguanine biosynthesis. In terms of biological role, catalyzes the ATP-dependent conversion of 7-carboxy-7-deazaguanine (CDG) to 7-cyano-7-deazaguanine (preQ(0)). This Campylobacter curvus (strain 525.92) protein is 7-cyano-7-deazaguanine synthase.